The following is a 329-amino-acid chain: uncharacterized protein (329 aa).

A run of 10 helical transmembrane segments spans residues 9 to 29, 53 to 73, 105 to 125, 126 to 146, 154 to 174, 179 to 199, 210 to 230, 240 to 260, 273 to 293, and 296 to 316; these read LMGLLIVLLAAIFFCFHNVIV, SHSFLLLLLRMLWVVPLMALI, FLMFLYLVLLYISISFIPTGI, AITLFFTYPIFTALLAWRLFN, WLVIGLTLIGTFLTIPYAYGG, LVLGVSTGIASGIVYAGYTVF, VPFTWISFATTLILSILCLII, WLAITIGSLLSALFTLAGHVL, AAIIGATNPALTVVLAGLAIQ, and LTNIQIFGVCLVTFSIALLNY. 2 consecutive EamA domains span residues 103 to 169 and 191 to 316; these read CGFL…LTIP and IVYA…LLNY.

It belongs to the EamA transporter family.

The protein resides in the cell membrane. This is an uncharacterized protein from Synechocystis sp. (strain ATCC 27184 / PCC 6803 / Kazusa).